We begin with the raw amino-acid sequence, 418 residues long: Centromere protein U (418 aa).

Over residues 1-11 the composition is skewed to basic residues; the sequence is MAPRGRRRPRP. The interval 1–76 is disordered; the sequence is MAPRGRRRPR…TYETFDPPLH (76 aa). The Nuclear localization signal motif lies at 6–23; that stretch reads RRRPRPHRSEGARRSKNT. Basic and acidic residues predominate over residues 12 to 42; it reads HRSEGARRSKNTLERTHSMKDKAGQKCKPID. A Phosphothreonine; by PLK1 modification is found at Thr-78. The disordered stretch occupies residues 88–227; that stretch reads SKHCGLSLSS…KRKKSRSKAI (140 aa). Thr-98 carries the phosphothreonine modification. Position 108 is a phosphoserine (Ser-108). At Thr-110 the chain carries Phosphothreonine. Phosphoserine occurs at positions 111, 116, and 120. The span at 124–133 shows a compositional bias: basic residues; the sequence is SAKKPGRKLR. A phosphoserine mark is found at Ser-136, Ser-139, and Ser-141. The segment covering 145 to 165 has biased composition (basic and acidic residues); that stretch reads SDTRRKVKSAEKISTQRHEVI. Residues 180–193 show a composition bias toward polar residues; sequence SVTSKKTGPLSAQP. Lys-185 participates in a covalent cross-link: Glycyl lysine isopeptide (Lys-Gly) (interchain with G-Cter in SUMO2). 2 positions are modified to phosphoserine: Ser-190 and Ser-194. Over residues 208–224 the composition is skewed to basic residues; the sequence is TQKKGKISHDKRKKSRS. Ser-232 is modified (phosphoserine). Coiled-coil stretches lie at residues 297–356 and 397–417; these read QMLT…NAAY and LLGA…LLDQ. The short motif at 303–320 is the Nuclear localization signal element; that stretch reads KRKNAKMISDIEKKRQRM.

This sequence belongs to the CENP-U/AME1 family. Component of the CENPA-NAC complex, at least composed of CENPA, CENPC, CENPH, CENPM, CENPN, CENPT and CENPU. The CENPA-NAC complex interacts with the CENPA-CAD complex, composed of CENPI, CENPK, CENPL, CENPO, CENPP, CENPQ, CENPR and CENPS. Interacts with MLF1. Interacts with PLK1. In terms of assembly, (Microbial infection) Interacts with the N-terminal domain of Kaposi's sarcoma-associated herpesvirus latent nuclear antigen (LNA). Phosphorylated by PLK1 at Thr-78, creating a self-tethering site that specifically interacts with the polo-box domain of PLK1. Expressed at high levels in the testis, fetal liver, thymus, bone marrow and at lower levels in the lymph nodes, placenta, colon and spleen. Present in all cell lines examined, including B-cells, T-cells, epithelial cells and fibroblast cells. Expressed at high levels in glioblastoma cell lines.

The protein localises to the cytoplasm. It localises to the nucleus. The protein resides in the chromosome. It is found in the centromere. Its subcellular location is the kinetochore. In terms of biological role, component of the CENPA-NAC (nucleosome-associated) complex, a complex that plays a central role in assembly of kinetochore proteins, mitotic progression and chromosome segregation. The CENPA-NAC complex recruits the CENPA-CAD (nucleosome distal) complex and may be involved in incorporation of newly synthesized CENPA into centromeres. Plays an important role in the correct PLK1 localization to the mitotic kinetochores. A scaffold protein responsible for the initial recruitment and maintenance of the kinetochore PLK1 population until its degradation. Involved in transcriptional repression. The sequence is that of Centromere protein U (CENPU) from Homo sapiens (Human).